Consider the following 257-residue polypeptide: Putative aldolase class 2 protein CC_1201 (257 aa).

The Zn(2+) site is built by His-114, His-116, and His-177.

It belongs to the aldolase class II family. Requires Zn(2+) as cofactor.

In Caulobacter vibrioides (strain ATCC 19089 / CIP 103742 / CB 15) (Caulobacter crescentus), this protein is Putative aldolase class 2 protein CC_1201.